Here is a 304-residue protein sequence, read N- to C-terminus: UDP-3-O-acyl-N-acetylglucosamine deacetylase (304 aa).

Zn(2+) is bound by residues His78, His237, and Asp241. Residue His264 is the Proton donor of the active site.

This sequence belongs to the LpxC family. Requires Zn(2+) as cofactor.

The catalysed reaction is a UDP-3-O-[(3R)-3-hydroxyacyl]-N-acetyl-alpha-D-glucosamine + H2O = a UDP-3-O-[(3R)-3-hydroxyacyl]-alpha-D-glucosamine + acetate. It functions in the pathway glycolipid biosynthesis; lipid IV(A) biosynthesis; lipid IV(A) from (3R)-3-hydroxytetradecanoyl-[acyl-carrier-protein] and UDP-N-acetyl-alpha-D-glucosamine: step 2/6. Catalyzes the hydrolysis of UDP-3-O-myristoyl-N-acetylglucosamine to form UDP-3-O-myristoylglucosamine and acetate, the committed step in lipid A biosynthesis. The chain is UDP-3-O-acyl-N-acetylglucosamine deacetylase from Polynucleobacter asymbioticus (strain DSM 18221 / CIP 109841 / QLW-P1DMWA-1) (Polynucleobacter necessarius subsp. asymbioticus).